Reading from the N-terminus, the 79-residue chain is MSTIEERVKKIVVEQLGVKEEEVTNSASFVDDLGADSLDTVELVMALEEEFECEIPDEEAEKITSVQQAIDYVKVHVKS.

Residues 2–77 (STIEERVKKI…QAIDYVKVHV (76 aa)) enclose the Carrier domain. Ser-37 bears the O-(pantetheine 4'-phosphoryl)serine mark.

It belongs to the acyl carrier protein (ACP) family. In terms of processing, 4'-phosphopantetheine is transferred from CoA to a specific serine of apo-ACP by AcpS. This modification is essential for activity because fatty acids are bound in thioester linkage to the sulfhydryl of the prosthetic group.

Its subcellular location is the cytoplasm. It functions in the pathway lipid metabolism; fatty acid biosynthesis. In terms of biological role, carrier of the growing fatty acid chain in fatty acid biosynthesis. This Xanthomonas albilineans protein is Acyl carrier protein.